The sequence spans 364 residues: Chorismate synthase (364 aa).

Residue R48 participates in NADP(+) binding. Residues 131 to 133 (RAS), 243 to 244 (NA), G288, 303 to 307 (KPTSS), and R329 each bind FMN.

Belongs to the chorismate synthase family. In terms of assembly, homotetramer. It depends on FMNH2 as a cofactor.

It catalyses the reaction 5-O-(1-carboxyvinyl)-3-phosphoshikimate = chorismate + phosphate. The protein operates within metabolic intermediate biosynthesis; chorismate biosynthesis; chorismate from D-erythrose 4-phosphate and phosphoenolpyruvate: step 7/7. In terms of biological role, catalyzes the anti-1,4-elimination of the C-3 phosphate and the C-6 proR hydrogen from 5-enolpyruvylshikimate-3-phosphate (EPSP) to yield chorismate, which is the branch point compound that serves as the starting substrate for the three terminal pathways of aromatic amino acid biosynthesis. This reaction introduces a second double bond into the aromatic ring system. The protein is Chorismate synthase of Bartonella bacilliformis (strain ATCC 35685 / KC583 / Herrer 020/F12,63).